A 225-amino-acid chain; its full sequence is Membrane protein (225 aa).

The Virion surface portion of the chain corresponds to 1 to 20 (MPNETNCTLDFEQSVQLFKE). The helical transmembrane segment at 21-41 (YNLFITAFLLFLTIILQYGYA) threads the bilayer. Topologically, residues 42–51 (TRSKVIYTLK) are intravirion. The chain crosses the membrane as a helical span at residues 52-72 (MIVLWCFWPLNIAVGVISCTY). Residues 73-77 (PPNTG) are Virion surface-facing. The chain crosses the membrane as a helical span at residues 78-98 (GLVAAIILTVFACLSFVGYWI). The Intravirion segment spans residues 99–225 (QSIRLFKRCR…VATGGSSLYT (127 aa)).

The protein belongs to the gammacoronaviruses M protein family. In terms of assembly, homomultimer. Interacts with envelope E protein in the budding compartment of the host cell, which is located between endoplasmic reticulum and the Golgi complex. Forms a complex with HE and S proteins. Interacts with nucleocapsid N protein. This interaction probably participates in RNA packaging into the virus.

It localises to the virion membrane. It is found in the host Golgi apparatus membrane. Functionally, component of the viral envelope that plays a central role in virus morphogenesis and assembly via its interactions with other viral proteins. The protein is Membrane protein of Avian infectious bronchitis virus (strain Beaudette) (IBV).